A 201-amino-acid polypeptide reads, in one-letter code: Recombination protein RecR (201 aa).

The C4-type zinc-finger motif lies at 60–75; it reads CSRCFHFTDAEECSIC. One can recognise a Toprim domain in the interval 83 to 178; sequence GEICVVETTA…RVSRIAYGIP (96 aa).

The protein belongs to the RecR family.

In terms of biological role, may play a role in DNA repair. It seems to be involved in an RecBC-independent recombinational process of DNA repair. It may act with RecF and RecO. The polypeptide is Recombination protein RecR (Syntrophobacter fumaroxidans (strain DSM 10017 / MPOB)).